We begin with the raw amino-acid sequence, 217 residues long: Ribonuclease T (217 aa).

Residues 20 to 194 (VVIDVETGGF…YDTDRTAELF (175 aa)) enclose the Exonuclease domain. Mg(2+)-binding residues include aspartate 23, glutamate 25, histidine 181, and aspartate 186. Residue histidine 181 is the Proton donor/acceptor of the active site.

Belongs to the RNase T family. In terms of assembly, homodimer. The cofactor is Mg(2+).

Its function is as follows. Trims short 3' overhangs of a variety of RNA species, leaving a one or two nucleotide 3' overhang. Responsible for the end-turnover of tRNA: specifically removes the terminal AMP residue from uncharged tRNA (tRNA-C-C-A). Also appears to be involved in tRNA biosynthesis. This Photorhabdus laumondii subsp. laumondii (strain DSM 15139 / CIP 105565 / TT01) (Photorhabdus luminescens subsp. laumondii) protein is Ribonuclease T.